The following is a 248-amino-acid chain: MATETIAMDWVDIGTNGESRLAYLARPVVTGRLPAVIVMPAIHGINTYIKDVAIDLAKAGFVALLIDIHSPEQEPDLSNAEKIQIAVETLDDRKVLKDVDAAVRYLEQHAAVRADRLGILGFCVGGTYALLAARTPAIRVSVGFYGLLEYQSRTDNKPVSPLDSVAQFTAPILFHVGDKDPWIDSKMLAEFTKRMQQHQKSYELCIYRGAGHAFHEHFRDAYRPIAAQSAWNNTLIYLRWHLCGKRTV.

Catalysis depends on residues Cys-123, Asp-180, and His-212.

It belongs to the dienelactone hydrolase family.

It carries out the reaction 2-oxo-3-(5-oxofuran-2-ylidene)propanoate + H2O = 3-maleylpyruvate + H(+). In terms of biological role, involved in the 5-nitroanthranilic acid (5NAA) degradation. Catalyzes the hydrolysis of the lactone to produce maleylpyruvate biodegradation of 5-nitroanthranilate. The chain is Probable 2-oxo-3-(5-oxofuran-2-ylidene)propanoate lactonase (naaC) from Bradyrhizobium sp.